A 359-amino-acid polypeptide reads, in one-letter code: MISKLSVNPTFSPSYNIIVDSVLDFSHILEYVTNKQVLVVTNTTVAKLYLTKFLAALVDDLDVRTCILEDGEQYKSQQSLDKILSTLLENHFTRNSTVLVALGGGVIGDITGFAAAIYQRGIDFIQIPTTLLSQVDSSVGGKTAINHQLGKNMIGAFYQPKVVYTSIEFYKTLPQREYIAGMAEVVKYAFISKDFYLWLDSNRDKILAKDSVTLIEMVKRSCQIKAQVVAMDEKELTGARAILNFGHTFGHAIEKCQNYRGLKHGEAVGVGMAQAIDFSHYLGLISQQQAKDFKDFIVSFGISIDFPNDICQKEFLEAMLLDKKNSNKELKFILIENIGSLSLQKQSKNELEQFLDISR.

NAD(+) is bound by residues Asp-70–Lys-75, Gly-105–Asp-109, Thr-129–Thr-130, Lys-142, Lys-151, and Phe-169–Thr-172. Residues Glu-184, His-247, and His-264 each contribute to the Zn(2+) site.

The protein belongs to the sugar phosphate cyclases superfamily. Dehydroquinate synthase family. Co(2+) serves as cofactor. The cofactor is Zn(2+). It depends on NAD(+) as a cofactor.

Its subcellular location is the cytoplasm. It catalyses the reaction 7-phospho-2-dehydro-3-deoxy-D-arabino-heptonate = 3-dehydroquinate + phosphate. Its pathway is metabolic intermediate biosynthesis; chorismate biosynthesis; chorismate from D-erythrose 4-phosphate and phosphoenolpyruvate: step 2/7. Functionally, catalyzes the conversion of 3-deoxy-D-arabino-heptulosonate 7-phosphate (DAHP) to dehydroquinate (DHQ). This is 3-dehydroquinate synthase from Francisella tularensis subsp. holarctica (strain FTNF002-00 / FTA).